Consider the following 160-residue polypeptide: Cyclic pyranopterin monophosphate synthase (160 aa).

Substrate is bound by residues 74 to 76 and 112 to 113; these read LSH and ME. Residue Asp127 is part of the active site.

The protein belongs to the MoaC family. Homohexamer; trimer of dimers.

It carries out the reaction (8S)-3',8-cyclo-7,8-dihydroguanosine 5'-triphosphate = cyclic pyranopterin phosphate + diphosphate. It participates in cofactor biosynthesis; molybdopterin biosynthesis. Its function is as follows. Catalyzes the conversion of (8S)-3',8-cyclo-7,8-dihydroguanosine 5'-triphosphate to cyclic pyranopterin monophosphate (cPMP). The protein is Cyclic pyranopterin monophosphate synthase of Geobacter metallireducens (strain ATCC 53774 / DSM 7210 / GS-15).